Here is a 514-residue protein sequence, read N- to C-terminus: Probable lysine--tRNA ligase, cytoplasmic (514 aa).

This sequence belongs to the class-II aminoacyl-tRNA synthetase family. Homodimer.

Its subcellular location is the cytoplasm. The catalysed reaction is tRNA(Lys) + L-lysine + ATP = L-lysyl-tRNA(Lys) + AMP + diphosphate. The chain is Probable lysine--tRNA ligase, cytoplasmic from Vairimorpha ceranae (strain BRL01) (Microsporidian parasite).